The following is a 513-amino-acid chain: MPREHDSKYHRERDMRSGLQETASRAHLYKGEYWRQIFNRRTPEQRRTLSHIKRFMERLAGDIKFRTAVSESVDAPRAVTERYGIEVDPLEILPLWRDDHLTYRYKPESAPWPLSIMWDEYMRDMLRHRDLLRDHGDMSMTNPRFHAWRERQIRRCNDELGGSAPSITHPIIAFELSEGCTVGCWFCGLSAAPFKGYYEYSKQHAELWRGVVGVASEVFGPAARTGFCYWATEPMDNPQYDRFLFDYYQITGALPQTTTAAPLKDEALTRRVLGLFNLYGTTMNRFSVLSTAHLNQIHRAFSPEELTGVELIMQGKDAPTAKAFTGRARKRKEKLSARQEAIAFPERNHTTIACVSGFLVNMPQRRLQLVTPVPGSGRWPLGYRIVGQRSFRTPDEFRDGLKSMIDQHMLESPAPDLPIRFRRDLEYTAGDRCFHLRSRSMEHRVLDYAPISVGHLIACGNFTASELVMRASTDGISVLAVADLLDQLYAAGVIEEDLDDRYAWQTSDGITDR.

Residues 1-16 are compositionally biased toward basic and acidic residues; the sequence is MPREHDSKYHRERDMR. Positions 1-21 are disordered; sequence MPREHDSKYHRERDMRSGLQE.

This is an uncharacterized protein from Sinorhizobium fredii (strain NBRC 101917 / NGR234).